Consider the following 94-residue polypeptide: Progonadoliberin-1 (94 aa).

Residues M1–C22 form the signal peptide. At Q23 the chain carries Pyrrolidone carboxylic acid. Glycine amide is present on G32.

The protein belongs to the GnRH family. Synthesized in preoptic neurons and is transported to the pituitary in the preoptic-hypophyseal axons.

It is found in the secreted. Functionally, stimulates the secretion of gonadotropins. May be responsible for the regulation of the hypothalamic-pituitary-gonadal axis. The sequence is that of Progonadoliberin-1 (gnrh1) from Haplochromis burtoni (Burton's mouthbrooder).